A 425-amino-acid chain; its full sequence is Histidine--tRNA ligase (425 aa).

It belongs to the class-II aminoacyl-tRNA synthetase family. As to quaternary structure, homodimer.

Its subcellular location is the cytoplasm. The enzyme catalyses tRNA(His) + L-histidine + ATP = L-histidyl-tRNA(His) + AMP + diphosphate + H(+). This is Histidine--tRNA ligase from Listeria monocytogenes serovar 1/2a (strain ATCC BAA-679 / EGD-e).